A 538-amino-acid polypeptide reads, in one-letter code: Chaperonin GroEL (538 aa).

ATP-binding positions include 30-33 (TLGP), 87-91 (DGTTT), Gly415, 479-481 (DAA), and Asp495.

It belongs to the chaperonin (HSP60) family. In terms of assembly, forms a cylinder of 14 subunits composed of two heptameric rings stacked back-to-back. Interacts with the co-chaperonin GroES.

Its subcellular location is the cytoplasm. It carries out the reaction ATP + H2O + a folded polypeptide = ADP + phosphate + an unfolded polypeptide.. Its function is as follows. Together with its co-chaperonin GroES, plays an essential role in assisting protein folding. The GroEL-GroES system forms a nano-cage that allows encapsulation of the non-native substrate proteins and provides a physical environment optimized to promote and accelerate protein folding. The polypeptide is Chaperonin GroEL (Dictyoglomus turgidum (strain DSM 6724 / Z-1310)).